The following is a 973-amino-acid chain: E3 ubiquitin-protein ligase BRE1A (973 aa).

The tract at residues 1–37 (MSGIGNKRAAGEPGTSMPPEKKTAVEDSGTTVETIKL) is disordered. Position 21 is an N6-acetyllysine (K21). Position 41 is a phosphoserine (S41). The stretch at 43 to 90 (TEELDIRTLQSKNRKLAEMLDQRQAIEDELREHIEKLERRQATDDASL) forms a coiled coil. The tract at residues 128–153 (VVPEPEPDSDSNQERKDDRERGDGQE) is disordered. A phosphoserine mark is found at S136 and S138. Residues 139–151 (NQERKDDRERGDG) show a composition bias toward basic and acidic residues. 2 coiled-coil regions span residues 168–378 (EEME…VKET) and 429–896 (SLHK…TTKK). 2 positions are modified to N6-acetyllysine: K348 and K510. Positions 507-620 (DLNKTRLRSG…GKHDDGRKKE (114 aa)) are disordered. At S522 the chain carries Phosphoserine. Basic and acidic residues-rich tracts occupy residues 527–544 (EDPK…EDLA) and 553–620 (SQED…RKKE). S560 bears the Phosphoserine mark. The segment at 920–959 (CPCCNMRKKDAVLTKCFHVFCFECVKTRYDTRQRKCPKCN) adopts an RING-type zinc-finger fold.

This sequence belongs to the BRE1 family. As to quaternary structure, component of the RNF20/40 complex (also known as BRE1 complex) probably composed of 2 copies of RNF20/BRE1A and 2 copies of RNF40/BRE1B. Interacts with UBE2E1/UBCH6. Interacts with p53/TP53 and WAC. Interacts with PAF1; the interaction mediates the association of the PAF1 and RNF20/40 complexes which is a prerequsite for recruitment of UBE2A/B. Interacts with PA2G4. Interacts with FBXL19.

It localises to the nucleus. The catalysed reaction is S-ubiquitinyl-[E2 ubiquitin-conjugating enzyme]-L-cysteine + [acceptor protein]-L-lysine = [E2 ubiquitin-conjugating enzyme]-L-cysteine + N(6)-ubiquitinyl-[acceptor protein]-L-lysine.. It functions in the pathway protein modification; protein ubiquitination. Component of the RNF20/40 E3 ubiquitin-protein ligase complex that mediates monoubiquitination of 'Lys-120' of histone H2B (H2BK120ub1). H2BK120ub1 gives a specific tag for epigenetic transcriptional activation and is also prerequisite for histone H3 'Lys-4' and 'Lys-79' methylation (H3K4me and H3K79me, respectively). It thereby plays a central role in histone code and gene regulation. The RNF20/40 complex forms a H2B ubiquitin ligase complex in cooperation with the E2 enzyme UBE2A or UBE2B; reports about the cooperation with UBE2E1/UBCH are contradictory. Required for transcriptional activation of Hox genes. Recruited to the MDM2 promoter, probably by being recruited by p53/TP53, and thereby acts as a transcriptional coactivator. Mediates the polyubiquitination of PA2G4 leading to its proteasome-mediated degradation. The chain is E3 ubiquitin-protein ligase BRE1A (Rnf20) from Mus musculus (Mouse).